A 111-amino-acid chain; its full sequence is Stress-response A/B barrel domain-containing protein At5g22580 (111 aa).

The region spanning 6 to 98 is the Stress-response A/B barrel domain; it reads FKHLVVVKFK…VIDKIVLLDF (93 aa). Mg(2+) is bound by residues V31, I34, D35, and V37.

Homodimer. Requires Mg(2+) as cofactor.

In terms of biological role, involved in stress response. The chain is Stress-response A/B barrel domain-containing protein At5g22580 from Arabidopsis thaliana (Mouse-ear cress).